The sequence spans 66 residues: MKAKEIRELSNEELQQKLSELKAELFNLRFQLATGQLDNPMRIRDVRKTIARIKTILRERELGIKR.

It belongs to the universal ribosomal protein uL29 family.

The sequence is that of Large ribosomal subunit protein uL29 from Caldanaerobacter subterraneus subsp. tengcongensis (strain DSM 15242 / JCM 11007 / NBRC 100824 / MB4) (Thermoanaerobacter tengcongensis).